The chain runs to 80 residues: Anaphase-promoting complex subunit hcn1 (80 aa).

N-acetylmethionine is present on methionine 1. Positions 26–54 (QTLDSESTTEEALQKNEESTRLSPEKKKI) are disordered. The segment covering 37–54 (ALQKNEESTRLSPEKKKI) has biased composition (basic and acidic residues).

In terms of assembly, the APC/C is composed of at least 13 subunits: apc1, apc2, nuc2, apc4, apc5, cut9, apc8, apc10, apc11, hcn1, apc13, apc14 and apc15. Interacts directly (via N-terminus) with cut9.

Its function is as follows. Component of the anaphase promoting complex/cyclosome (APC/C), a cell cycle-regulated E3 ubiquitin-protein ligase complex that controls progression through mitosis and the G1 phase of the cell cycle. The APC/C is thought to confer substrate specificity and, in the presence of ubiquitin-conjugating E2 enzymes, it catalyzes the formation of protein-ubiquitin conjugates that are subsequently degraded by the 26S proteasome. Has a role in assembling cut9 in the 20S APC/cyclosome. The sequence is that of Anaphase-promoting complex subunit hcn1 (hcn1) from Schizosaccharomyces pombe (strain 972 / ATCC 24843) (Fission yeast).